Reading from the N-terminus, the 761-residue chain is Phosphoribosylformylglycinamidine synthase subunit PurL (761 aa).

The segment covering 1–16 (MTGNPAAPAATSVSPP) has biased composition (low complexity). The disordered stretch occupies residues 1–21 (MTGNPAAPAATSVSPPAEQPY). H57 is an active-site residue. ATP contacts are provided by Y60 and K101. Residue E103 participates in Mg(2+) binding. Residues 104–107 (SHNH) and R126 each bind substrate. H105 (proton acceptor) is an active-site residue. D127 lines the Mg(2+) pocket. Q252 is a binding site for substrate. D280 is a Mg(2+) binding site. 329–331 (ESQ) lines the substrate pocket. ATP-binding residues include N519 and G556. Residue N557 coordinates Mg(2+). S559 is a binding site for substrate.

This sequence belongs to the FGAMS family. As to quaternary structure, monomer. Part of the FGAM synthase complex composed of 1 PurL, 1 PurQ and 2 PurS subunits.

It is found in the cytoplasm. It carries out the reaction N(2)-formyl-N(1)-(5-phospho-beta-D-ribosyl)glycinamide + L-glutamine + ATP + H2O = 2-formamido-N(1)-(5-O-phospho-beta-D-ribosyl)acetamidine + L-glutamate + ADP + phosphate + H(+). It participates in purine metabolism; IMP biosynthesis via de novo pathway; 5-amino-1-(5-phospho-D-ribosyl)imidazole from N(2)-formyl-N(1)-(5-phospho-D-ribosyl)glycinamide: step 1/2. Part of the phosphoribosylformylglycinamidine synthase complex involved in the purines biosynthetic pathway. Catalyzes the ATP-dependent conversion of formylglycinamide ribonucleotide (FGAR) and glutamine to yield formylglycinamidine ribonucleotide (FGAM) and glutamate. The FGAM synthase complex is composed of three subunits. PurQ produces an ammonia molecule by converting glutamine to glutamate. PurL transfers the ammonia molecule to FGAR to form FGAM in an ATP-dependent manner. PurS interacts with PurQ and PurL and is thought to assist in the transfer of the ammonia molecule from PurQ to PurL. This Frankia casuarinae (strain DSM 45818 / CECT 9043 / HFP020203 / CcI3) protein is Phosphoribosylformylglycinamidine synthase subunit PurL.